We begin with the raw amino-acid sequence, 61 residues long: Small ribosomal subunit protein uS14 (61 aa).

Zn(2+) contacts are provided by Cys-24, Cys-27, Cys-40, and Cys-43.

It belongs to the universal ribosomal protein uS14 family. Zinc-binding uS14 subfamily. In terms of assembly, part of the 30S ribosomal subunit. Contacts proteins S3 and S10. Zn(2+) is required as a cofactor.

Its function is as follows. Binds 16S rRNA, required for the assembly of 30S particles and may also be responsible for determining the conformation of the 16S rRNA at the A site. This chain is Small ribosomal subunit protein uS14, found in Clostridium botulinum (strain Alaska E43 / Type E3).